The chain runs to 909 residues: Protein translocase subunit SecA (909 aa).

ATP is bound by residues Gln87 and 105–109 (GEGKT). The disordered stretch occupies residues 246 to 265 (LEQQEKEDEEGKNGDGDYTI). Basic and acidic residues predominate over residues 254–265 (EEGKNGDGDYTI). An ATP-binding site is contributed by Asp512. The segment covering 834 to 858 (ESDVEAVEEQRRQADEQPKQYEHET) has biased composition (basic and acidic residues). The disordered stretch occupies residues 834–899 (ESDVEAVEEQ…NDPCPCGSGL (66 aa)). A compositionally biased stretch (low complexity) spans 859–875 (ASATQAPEQAPEAAPAA). Zn(2+)-binding residues include Cys893, Cys895, Cys904, and His905.

Belongs to the SecA family. As to quaternary structure, monomer and homodimer. Part of the essential Sec protein translocation apparatus which comprises SecA, SecYEG and auxiliary proteins SecDF-YajC and YidC. Zn(2+) serves as cofactor.

Its subcellular location is the cell inner membrane. It is found in the cytoplasm. The enzyme catalyses ATP + H2O + cellular proteinSide 1 = ADP + phosphate + cellular proteinSide 2.. In terms of biological role, part of the Sec protein translocase complex. Interacts with the SecYEG preprotein conducting channel. Has a central role in coupling the hydrolysis of ATP to the transfer of proteins into and across the cell membrane, serving both as a receptor for the preprotein-SecB complex and as an ATP-driven molecular motor driving the stepwise translocation of polypeptide chains across the membrane. This chain is Protein translocase subunit SecA, found in Pseudoalteromonas atlantica (strain T6c / ATCC BAA-1087).